The primary structure comprises 1001 residues: Ulvan lyase, long isoform (1001 aa).

The first 21 residues, 1–21, serve as a signal peptide directing secretion; that stretch reads MNGLKMLLFSTTLLTAFTLHA. A substrate-binding site is contributed by 126–127; the sequence is SH. Residue histidine 127 is the Proton donor/acceptor of the active site. Aspartate 189, aspartate 199, and lysine 201 together coordinate Ca(2+). Residues tyrosine 280 and arginine 297 each contribute to the substrate site. Ca(2+)-binding residues include aspartate 300, aspartate 303, and tyrosine 305. Substrate is bound at residue tyrosine 361.

The protein belongs to the polysaccharide lyase 24 family.

Ulvan lyase involved in ulvan degradation. Ulvan is the main polysaccharide component of the Ulvales (green seaweed) cell wall. It is composed of disaccharide building blocks comprising 3-sulfated rhamnose (Rha3S) linked to D-glucuronic acid (GlcA), L-iduronic acid (IduA), or D-xylose (Xyl). Ulvan lyase catalyzes preferentially the endolytic cleavage of the glycosidic bond between Rha3S and the uronic acid GlcA, but not IduA, producing oligosaccharides that have unsaturated 4-deoxy-L-threo-hex-4-enopyranosiduronic acid (deltaUA) at the non-reducing end. The most abundant end products in the degradation of the ulvan polysaccharide were deltaUA-Rha3S disaccharides and deltaUA-Rha3S-IduA-Rha3S and deltaUA-Rha3S-Xyl-Rha3S tetrasaccharides. This is Ulvan lyase, long isoform from Pseudoalteromonas sp. (strain PLSV).